The chain runs to 269 residues: MWPSLSNELFPPPTEVWLQTVSSDPEAQGWGAWGRTEKTSLVPSAGSDKEAEENEDSSFLLSLLEPENLAKSPVYNQELEAIRLKLWTMEHAEVLPEPPSVQRKATEEERAEARELLSPETIGCFFPGAPKENVEADHRSVYVGNVDYGGSAAELEAYFSPCGEIHRVTILCDKFSGHPKGYAYIEFASKSSVQAAVRLDESTFRGRVIKVLPKRTNFPGISSTDRGGLRTHSSSRAAFLQGSLQRKPRLRPHGQSRGRGRASPWFSPY.

A disordered region spans residues 26–54 (EAQGWGAWGRTEKTSLVPSAGSDKEAEEN). One can recognise an RRM domain in the interval 139-216 (RSVYVGNVDY…RVIKVLPKRT (78 aa)). A disordered region spans residues 240 to 269 (LQGSLQRKPRLRPHGQSRGRGRASPWFSPY). Basic residues predominate over residues 246-260 (RKPRLRPHGQSRGRG).

The protein localises to the cytoplasm. In terms of biological role, binds the poly(A) tail of mRNA. This Rattus norvegicus (Rat) protein is Embryonic polyadenylate-binding protein 2 (Pabpn1l).